The chain runs to 201 residues: ATP-dependent Clp protease proteolytic subunit 2 (201 aa).

S100 (nucleophile) is an active-site residue. H125 is an active-site residue.

The protein belongs to the peptidase S14 family. As to quaternary structure, fourteen ClpP subunits assemble into 2 heptameric rings which stack back to back to give a disk-like structure with a central cavity, resembling the structure of eukaryotic proteasomes.

The protein localises to the cytoplasm. The enzyme catalyses Hydrolysis of proteins to small peptides in the presence of ATP and magnesium. alpha-casein is the usual test substrate. In the absence of ATP, only oligopeptides shorter than five residues are hydrolyzed (such as succinyl-Leu-Tyr-|-NHMec, and Leu-Tyr-Leu-|-Tyr-Trp, in which cleavage of the -Tyr-|-Leu- and -Tyr-|-Trp bonds also occurs).. Cleaves peptides in various proteins in a process that requires ATP hydrolysis. Has a chymotrypsin-like activity. Plays a major role in the degradation of misfolded proteins. The protein is ATP-dependent Clp protease proteolytic subunit 2 of Corynebacterium glutamicum (strain ATCC 13032 / DSM 20300 / JCM 1318 / BCRC 11384 / CCUG 27702 / LMG 3730 / NBRC 12168 / NCIMB 10025 / NRRL B-2784 / 534).